The following is a 552-amino-acid chain: Non-structural protein NS1 (552 aa).

Belongs to the orbivirus non-structural protein NS1 family.

In Antilocapra americana (Pronghorn), this protein is Non-structural protein NS1 (Segment-5).